A 138-amino-acid polypeptide reads, in one-letter code: Ribosome-binding factor A (138 aa).

It belongs to the RbfA family. As to quaternary structure, monomer. Binds 30S ribosomal subunits, but not 50S ribosomal subunits or 70S ribosomes.

It is found in the cytoplasm. In terms of biological role, one of several proteins that assist in the late maturation steps of the functional core of the 30S ribosomal subunit. Associates with free 30S ribosomal subunits (but not with 30S subunits that are part of 70S ribosomes or polysomes). Required for efficient processing of 16S rRNA. May interact with the 5'-terminal helix region of 16S rRNA. The protein is Ribosome-binding factor A of Bradyrhizobium sp. (strain ORS 278).